The following is a 337-amino-acid chain: Receptor like protein kinase S.3 (337 aa).

The 267-residue stretch at 50–316 folds into the Protein kinase domain; that stretch reads FKESELFGTE…VNYLEGNDVL (267 aa). Residues 56–64 and lysine 78 each bind ATP; that span reads FGTEANGTV. Position 123 is a phosphotyrosine (tyrosine 123). Aspartate 171 serves as the catalytic Proton acceptor.

Belongs to the protein kinase superfamily. Ser/Thr protein kinase family.

The enzyme catalyses L-seryl-[protein] + ATP = O-phospho-L-seryl-[protein] + ADP + H(+). It catalyses the reaction L-threonyl-[protein] + ATP = O-phospho-L-threonyl-[protein] + ADP + H(+). This is Receptor like protein kinase S.3 (LECRKS3) from Arabidopsis thaliana (Mouse-ear cress).